Consider the following 369-residue polypeptide: Opsin Rh6 (369 aa).

Over 1–46 (MASLHPPSFAYMRDGRNLSLAESVPAEIMHMVDPYWYQWPPLEPMW) the chain is Extracellular. N-linked (GlcNAc...) asparagine glycosylation occurs at Asn-17. A helical membrane pass occupies residues 47-71 (FGIIGFVIAILGTMSLAGNFIVMYI). The Cytoplasmic segment spans residues 72–83 (FTSSKGLRTPSN). The helical transmembrane segment at 84–109 (MFVVNLAFSDFMMMFTMFPPVVLNGF) threads the bilayer. The Extracellular portion of the chain corresponds to 110 to 123 (YGTWIMGPFLCELY). Residues Cys-120 and Cys-197 are joined by a disulfide bond. A helical membrane pass occupies residues 124-143 (GMFGSLFGCVSIWSMTLIAY). Topologically, residues 144–162 (DRYCVIVKGMARKPLTATA) are cytoplasmic. The chain crosses the membrane as a helical span at residues 163–186 (AVLRLMVVWTICGAWALMPLFGWN). The Extracellular portion of the chain corresponds to 187–210 (RYVPEGNMTACGTDYFAKDWWNRS). Asn-193 and Asn-208 each carry an N-linked (GlcNAc...) asparagine glycan. A helical membrane pass occupies residues 211–238 (YIIVYSLWVYLTPLLTIIFSYWHIMKAV). The Cytoplasmic portion of the chain corresponds to 239–274 (AAHEKAMREQAKKMNVASLRNSEADKSKAIEIKLAK). A helical transmembrane segment spans residues 275–298 (VALTTISLWFFAWTPYTIINYAGI). The Extracellular portion of the chain corresponds to 299-305 (FESMHLS). A helical transmembrane segment spans residues 306–330 (PLSTICGSVFAKANAVCNPIVYGLS). An N6-(retinylidene)lysine modification is found at Lys-317. The Cytoplasmic portion of the chain corresponds to 331–369 (HPKYKQVLREKMPCLACGKDDLTSDSRTQATAEISESQA).

This sequence belongs to the G-protein coupled receptor 1 family. Opsin subfamily. Post-translationally, phosphorylated on some or all of the serine and threonine residues present in the C-terminal region. As to expression, each Drosophila eye is composed of 800 facets or ommatidia. Each ommatidium contains 8 photoreceptor cells (R1-R8), the R1 to R6 cells are outer cells, while R7 and R8 are inner cells. Rh6 is expressed in a subset of R8 cells, most likely expressed in the subset of R8 cells paired with Rh4-expressing R7 cells (R7y).

It localises to the membrane. Its function is as follows. Visual pigments are the light-absorbing molecules that mediate vision. They consist of an apoprotein, opsin, covalently linked to cis-retinal. In Drosophila melanogaster (Fruit fly), this protein is Opsin Rh6 (Rh6).